Consider the following 65-residue polypeptide: Large ribosomal subunit protein bL35 (65 aa).

The disordered stretch occupies residues 1-26 (MPKMKTHRGAAKRFKKTGSGKLKRAK).

This sequence belongs to the bacterial ribosomal protein bL35 family.

This chain is Large ribosomal subunit protein bL35, found in Clostridium novyi (strain NT).